Reading from the N-terminus, the 132-residue chain is Large ribosomal subunit protein bL17 (132 aa).

It belongs to the bacterial ribosomal protein bL17 family. In terms of assembly, part of the 50S ribosomal subunit. Contacts protein L32.

This chain is Large ribosomal subunit protein bL17, found in Polaromonas sp. (strain JS666 / ATCC BAA-500).